Reading from the N-terminus, the 302-residue chain is Phosphatidylglycerol--prolipoprotein diacylglyceryl transferase (302 aa).

Helical transmembrane passes span 19–39 (FGPL…LLGW), 67–87 (LVLW…FVFY), 108–128 (IWEG…AIIL), 143–163 (LIAP…FING), 203–223 (QLYE…FAIY), 232–252 (GALV…LENV), and 264–284 (LGLT…GWLL). Arginine 156 serves as a coordination point for a 1,2-diacyl-sn-glycero-3-phospho-(1'-sn-glycerol).

This sequence belongs to the Lgt family.

It localises to the cell inner membrane. It catalyses the reaction L-cysteinyl-[prolipoprotein] + a 1,2-diacyl-sn-glycero-3-phospho-(1'-sn-glycerol) = an S-1,2-diacyl-sn-glyceryl-L-cysteinyl-[prolipoprotein] + sn-glycerol 1-phosphate + H(+). The protein operates within protein modification; lipoprotein biosynthesis (diacylglyceryl transfer). In terms of biological role, catalyzes the transfer of the diacylglyceryl group from phosphatidylglycerol to the sulfhydryl group of the N-terminal cysteine of a prolipoprotein, the first step in the formation of mature lipoproteins. The polypeptide is Phosphatidylglycerol--prolipoprotein diacylglyceryl transferase (Caulobacter vibrioides (strain ATCC 19089 / CIP 103742 / CB 15) (Caulobacter crescentus)).